The primary structure comprises 790 residues: F-box and leucine-rich repeat protein 13 (790 aa).

In terms of domain architecture, F-box spans 237–283; that stretch reads AFDISVLPEQAILQIFLYLTFKDMMACSRVNRSWMAMIQRGSLWNSI. LRR repeat units lie at residues 503 to 525, 531 to 552, 557 to 579, 582 to 602, 606 to 628, and 632 to 657; these read QLTVLNLTNCIRIGDIGLKHFFD, RLRELNLTNCSLLGDSSVIRLS, NLHYLNLRNCEHLTDLAIEYIAS, SLISVDLSGTLISNEGMTILS, KLREVSVSDCVNITDFGIRAYCK, and LLEHLDVSYCSQLTDDIIKTIAIFCT.

Belongs to the DRC6 family. Component of the nexin-dynein regulatory complex (N-DRC). Directly interacts with SKP1 and CUL1. Interacts with TCTE1/DRC5.

Its subcellular location is the cytoplasm. It is found in the cytoskeleton. The protein localises to the flagellum axoneme. The protein resides in the microtubule organizing center. It localises to the centrosome. In terms of biological role, substrate-recognition component of the SCF (SKP1-CUL1-F-box protein)-type E3 ubiquitin ligase complex. Component of the nexin-dynein regulatory complex (N-DRC), a key regulator of ciliary/flagellar motility which maintains the alignment and integrity of the distal axoneme and regulates microtubule sliding in motile axonemes. Specifically targets CEP192 isoform 3 for ubiquitin-mediated proteolysis and thereby acts as a regulator of microtubule nucleation activity. This is F-box and leucine-rich repeat protein 13 (Fbxl13) from Mus musculus (Mouse).